A 237-amino-acid chain; its full sequence is 7-carboxy-7-deazaguanine synthase (237 aa).

Substrate is bound by residues 15–17 and Arg-30; that span reads LSG. Positions 21–233 constitute a Radical SAM core domain; sequence STGIPTIFVR…IQTHKYIWGD (213 aa). [4Fe-4S] cluster-binding residues include Cys-34, Cys-38, and Cys-48. Thr-50 is a binding site for Mg(2+). Thr-84 serves as a coordination point for substrate. Gly-86 provides a ligand contact to S-adenosyl-L-methionine.

This sequence belongs to the radical SAM superfamily. 7-carboxy-7-deazaguanine synthase family. As to quaternary structure, homodimer. The cofactor is [4Fe-4S] cluster. It depends on S-adenosyl-L-methionine as a cofactor. Requires Mg(2+) as cofactor.

The enzyme catalyses 6-carboxy-5,6,7,8-tetrahydropterin + H(+) = 7-carboxy-7-deazaguanine + NH4(+). Its pathway is purine metabolism; 7-cyano-7-deazaguanine biosynthesis. In terms of biological role, catalyzes the complex heterocyclic radical-mediated conversion of 6-carboxy-5,6,7,8-tetrahydropterin (CPH4) to 7-carboxy-7-deazaguanine (CDG), a step common to the biosynthetic pathways of all 7-deazapurine-containing compounds. This is 7-carboxy-7-deazaguanine synthase from Leptospira interrogans serogroup Icterohaemorrhagiae serovar Lai (strain 56601).